A 541-amino-acid chain; its full sequence is Chaperonin GroEL 2 (541 aa).

ATP-binding positions include 29 to 32 (TLGP), 86 to 90 (DGTTT), G413, 477 to 479 (NAA), and D493.

The protein belongs to the chaperonin (HSP60) family. Forms a cylinder of 14 subunits composed of two heptameric rings stacked back-to-back. Interacts with the co-chaperonin GroES.

The protein localises to the cytoplasm. The enzyme catalyses ATP + H2O + a folded polypeptide = ADP + phosphate + an unfolded polypeptide.. In terms of biological role, together with its co-chaperonin GroES, plays an essential role in assisting protein folding. The GroEL-GroES system forms a nano-cage that allows encapsulation of the non-native substrate proteins and provides a physical environment optimized to promote and accelerate protein folding. The chain is Chaperonin GroEL 2 from Nocardioides sp. (strain ATCC BAA-499 / JS614).